The sequence spans 218 residues: Peptide deformylase 1 (218 aa).

The Fe cation site is built by Cys126 and His168. Glu169 is an active-site residue. His172 is a binding site for Fe cation.

It belongs to the polypeptide deformylase family. It depends on Fe(2+) as a cofactor.

The enzyme catalyses N-terminal N-formyl-L-methionyl-[peptide] + H2O = N-terminal L-methionyl-[peptide] + formate. Removes the formyl group from the N-terminal Met of newly synthesized proteins. Requires at least a dipeptide for an efficient rate of reaction. N-terminal L-methionine is a prerequisite for activity but the enzyme has broad specificity at other positions. The polypeptide is Peptide deformylase 1 (Streptomyces coelicolor (strain ATCC BAA-471 / A3(2) / M145)).